The following is a 98-amino-acid chain: MITKYFSKVIVRFNPFGKEAKVARLVLAAIPPTQRNMGTQIQSEIISDYNKVKPLVKVTYKDKKEMEVDPSNMNFQELANHFDRHSKQLDLKHMLEMH.

This sequence belongs to the mitochondrion-specific ribosomal protein mL53 family. As to quaternary structure, component of the mitochondrial large ribosomal subunit (mt-LSU). Mature yeast 74S mitochondrial ribosomes consist of a small (37S) and a large (54S) subunit. The 37S small subunit contains a 15S ribosomal RNA (15S mt-rRNA) and 34 different proteins. The 54S large subunit contains a 21S rRNA (21S mt-rRNA) and 46 different proteins.

The protein localises to the mitochondrion. Functionally, component of the mitochondrial ribosome (mitoribosome), a dedicated translation machinery responsible for the synthesis of mitochondrial genome-encoded proteins, including at least some of the essential transmembrane subunits of the mitochondrial respiratory chain. The mitoribosomes are attached to the mitochondrial inner membrane and translation products are cotranslationally integrated into the membrane. In Saccharomyces cerevisiae (strain ATCC 204508 / S288c) (Baker's yeast), this protein is Large ribosomal subunit protein mL53 (MRPL44).